Here is a 229-residue protein sequence, read N- to C-terminus: Ion-translocating oxidoreductase complex subunit E (229 aa).

The next 5 helical transmembrane spans lie at 58-78 (LGLG…ISLF), 82-102 (IPHD…VTTI), 105-125 (LMNA…PLIV), 147-167 (AFDG…LGAI), and 201-221 (GLLL…ILAV).

The protein belongs to the NqrDE/RnfAE family. In terms of assembly, the complex is composed of six subunits: RnfA, RnfB, RnfC, RnfD, RnfE and RnfG.

It localises to the cell inner membrane. In terms of biological role, part of a membrane-bound complex that couples electron transfer with translocation of ions across the membrane. The sequence is that of Ion-translocating oxidoreductase complex subunit E from Glaesserella parasuis serovar 5 (strain SH0165) (Haemophilus parasuis).